Here is a 364-residue protein sequence, read N- to C-terminus: Peptide chain release factor 1 (364 aa).

Gln232 bears the N5-methylglutamine mark.

The protein belongs to the prokaryotic/mitochondrial release factor family. Post-translationally, methylated by PrmC. Methylation increases the termination efficiency of RF1.

It is found in the cytoplasm. In terms of biological role, peptide chain release factor 1 directs the termination of translation in response to the peptide chain termination codons UAG and UAA. The protein is Peptide chain release factor 1 of Sorangium cellulosum (strain So ce56) (Polyangium cellulosum (strain So ce56)).